Consider the following 881-residue polypeptide: Putative SWI/SNF-related matrix-associated actin-dependent regulator of chromatin subfamily A member 3-like 1 (881 aa).

Residues 272-486 (DKRPDPLRGG…YSLMAFLRFE (215 aa)) form the Helicase ATP-binding domain. 285-292 (DDMGLGKT) contributes to the ATP binding site. The interval 308–343 (STSTPTEEPLDGEGDKIEKKGKKRGRGKSSESVTRK) is disordered. A DEAH box motif is present at residues 437-440 (DEAH). The segment at 635 to 674 (CPICISPPTNIIITRCAHIFCRACILQTLQRSKPLCPLCR) adopts an RING-type zinc-finger fold. Residues 681-703 (DLYNAPPPPPDSSNTDGEDAKSS) form a disordered region. The region spanning 711-876 (ALLSLLMASR…EREVNVEDVV (166 aa)) is the Helicase C-terminal domain.

Belongs to the SNF2/RAD54 helicase family. RAD16 subfamily.

The protein resides in the nucleus. In terms of biological role, possesses intrinsic ATP-dependent nucleosome-remodeling activity. This activity may be required for transcriptional activation or repression of specific target promoters. The polypeptide is Putative SWI/SNF-related matrix-associated actin-dependent regulator of chromatin subfamily A member 3-like 1 (Arabidopsis thaliana (Mouse-ear cress)).